The sequence spans 351 residues: Pentatricopeptide repeat-containing protein At3g56030, mitochondrial (351 aa).

Residues 1–41 (MFRLKPLISVDLNQTMSLLRRFVKEANNSRFLLQSISGRSF) constitute a mitochondrion transit peptide. PPR repeat units follow at residues 124-158 (RKHS…EFGL), 159-193 (STCV…AIPV), 194-224 (DVTS…MEEE), and 232-266 (DTRT…GLSV).

This sequence belongs to the PPR family. P subfamily.

The protein localises to the mitochondrion. In Arabidopsis thaliana (Mouse-ear cress), this protein is Pentatricopeptide repeat-containing protein At3g56030, mitochondrial.